The chain runs to 216 residues: Early E3 25 kDa glycoprotein (216 aa).

7 N-linked (GlcNAc...) asparagine; by host glycosylation sites follow: asparagine 25, asparagine 82, asparagine 97, asparagine 109, asparagine 142, asparagine 147, and asparagine 160.

This chain is Early E3 25 kDa glycoprotein, found in Canis lupus familiaris (Dog).